Here is a 767-residue protein sequence, read N- to C-terminus: Probable beta-glucosidase K (767 aa).

N-linked (GlcNAc...) asparagine glycosylation is present at Asn19. The active site involves Asp232. N-linked (GlcNAc...) asparagine glycosylation is found at Asn324, Asn477, and Asn749. Residues Glu405–Val552 enclose the PA14 domain. The segment at Leu727 to Arg767 is disordered. Over residues Arg743 to Gln757 the composition is skewed to polar residues.

The protein belongs to the glycosyl hydrolase 3 family.

The protein resides in the secreted. It carries out the reaction Hydrolysis of terminal, non-reducing beta-D-glucosyl residues with release of beta-D-glucose.. The protein operates within glycan metabolism; cellulose degradation. In terms of biological role, beta-glucosidases are one of a number of cellulolytic enzymes involved in the degradation of cellulosic biomass. Catalyzes the last step releasing glucose from the inhibitory cellobiose. This Aspergillus fumigatus (strain ATCC MYA-4609 / CBS 101355 / FGSC A1100 / Af293) (Neosartorya fumigata) protein is Probable beta-glucosidase K (bglK).